The chain runs to 129 residues: Small ribosomal subunit protein uS9 (129 aa).

It belongs to the universal ribosomal protein uS9 family.

This Chlorobium limicola (strain DSM 245 / NBRC 103803 / 6330) protein is Small ribosomal subunit protein uS9.